The primary structure comprises 80 residues: Defensin-like protein 46 (80 aa).

Residues 1 to 27 (MGSTKTLVTCFLTIILAVSLSNHNVLA) form the signal peptide. Cystine bridges form between Cys-40–Cys-78, Cys-44–Cys-65, Cys-50–Cys-76, and Cys-54–Cys-77.

The protein belongs to the DEFL family.

The protein resides in the secreted. This Arabidopsis thaliana (Mouse-ear cress) protein is Defensin-like protein 46.